The following is a 526-amino-acid chain: Glucose-6-phosphate isomerase (526 aa).

The active-site Proton donor is the Glu-347. Catalysis depends on residues His-378 and Lys-493.

Belongs to the GPI family.

It localises to the cytoplasm. The catalysed reaction is alpha-D-glucose 6-phosphate = beta-D-fructose 6-phosphate. The protein operates within carbohydrate biosynthesis; gluconeogenesis. It functions in the pathway carbohydrate degradation; glycolysis; D-glyceraldehyde 3-phosphate and glycerone phosphate from D-glucose: step 2/4. Catalyzes the reversible isomerization of glucose-6-phosphate to fructose-6-phosphate. This chain is Glucose-6-phosphate isomerase, found in Chlamydia pneumoniae (Chlamydophila pneumoniae).